A 455-amino-acid polypeptide reads, in one-letter code: CDP-diacylglycerol--serine O-phosphatidyltransferase (455 aa).

PLD phosphodiesterase domains are found at residues 134 to 160 and 356 to 383; these read VFGV…NNVY and GDNT…NPRA.

Belongs to the CDP-alcohol phosphatidyltransferase class-II family. As to quaternary structure, multimeric.

It localises to the cytoplasm. The protein localises to the cell inner membrane. It catalyses the reaction a CDP-1,2-diacyl-sn-glycerol + L-serine = a 1,2-diacyl-sn-glycero-3-phospho-L-serine + CMP + H(+). The sequence is that of CDP-diacylglycerol--serine O-phosphatidyltransferase (pssA) from Haemophilus influenzae (strain ATCC 51907 / DSM 11121 / KW20 / Rd).